The sequence spans 922 residues: Metabotropic glutamate receptor 7 (922 aa).

The first 34 residues, 1–34 (MVQLRKLLRVLTLMKFPCCVLEVLLCALAAAARG), serve as a signal peptide directing secretion. Over 35–590 (QEMYAPHSIR…IIKLEWHSPW (556 aa)) the chain is Extracellular. A disulfide bond links cysteine 67 and cysteine 109. N-linked (GlcNAc...) asparagine glycosylation occurs at asparagine 98. Residues serine 159, 180 to 182 (AST), tyrosine 230, and aspartate 314 contribute to the L-glutamate site. 7 disulfides stabilise this stretch: cysteine 249-cysteine 541, cysteine 374-cysteine 390, cysteine 430-cysteine 437, cysteine 523-cysteine 542, cysteine 527-cysteine 545, cysteine 548-cysteine 560, and cysteine 563-cysteine 576. Lysine 407 contacts L-glutamate. N-linked (GlcNAc...) asparagine glycosylation is found at asparagine 458 and asparagine 486. A glycan (N-linked (GlcNAc...) asparagine) is linked at asparagine 572. The chain crosses the membrane as a helical span at residues 591-615 (AVIPVFLAMLGIIATIFVMATFIRY). Residues 616–627 (NDTPIVRASGRE) lie on the Cytoplasmic side of the membrane. The chain crosses the membrane as a helical span at residues 628-648 (LSYVLLTGIFLCYIITFLMIA). Over 649–654 (KPDVAV) the chain is Extracellular. Residues 655 to 675 (CSFRRVFLGLGMCISYAALLT) traverse the membrane as a helical segment. Over 676–702 (KTNRIYRIFEQGKKSVTAPRLISPTSQ) the chain is Cytoplasmic. The helical transmembrane segment at 703–723 (LAITSSLISVQLLGVFIWFGV) threads the bilayer. At 724–753 (DPPNIIIDYDEHKTMNPEQARGVLKCDITD) the chain is on the extracellular side. Residues 754–775 (LQIICSLGYSILLMVTCTVYAI) form a helical membrane-spanning segment. Over 776-788 (KTRGVPENFNEAK) the chain is Cytoplasmic. Residues 789 to 810 (PIGFTMYTTCIVWLAFIPIFFG) form a helical membrane-spanning segment. The Extracellular segment spans residues 811-825 (TAQSAEKLYIQTTTL). The helical transmembrane segment at 826 to 850 (TISMNLSASVALGMLYMPKVYIIIF) threads the bilayer. Residues 851 to 922 (HPELNVQKRK…VTWYTIPPTV (72 aa)) are Cytoplasmic-facing.

It belongs to the G-protein coupled receptor 3 family. As to quaternary structure, homodimer. Interacts with PICK1.

The protein resides in the cell membrane. Functionally, G-protein coupled receptor activated by glutamate that regulates axon outgrowth through the MAPK-cAMP-PKA signaling pathway during neuronal development. Ligand binding causes a conformation change that triggers signaling via guanine nucleotide-binding proteins (G proteins) and modulates the activity of downstream effectors, such as adenylate cyclase that it inhibits. The polypeptide is Metabotropic glutamate receptor 7 (GRM7) (Pongo abelii (Sumatran orangutan)).